We begin with the raw amino-acid sequence, 544 residues long: Involucrin (544 aa).

The disordered stretch occupies residues 1–520 (MSQQHTLPVT…GQVQGIQQAL (520 aa)). Residues 76–90 (EQQQQPQEQKLQQQH) show a composition bias toward low complexity. Basic and acidic residues-rich tracts occupy residues 96 to 117 (EHQK…REKQ), 124 to 152 (EEEK…KEQL), 202 to 234 (QLKH…KQSE), 252 to 271 (QLKH…HQEG), 283 to 297 (KHLE…HPEQ), 304 to 347 (QLEE…HPEQ), 354 to 411 (QLEE…REEQ), 423 to 437 (KHLE…HPEQ), and 462 to 476 (KHLE…HPEQ). Positions 477–494 (QEGQLKPQEQQEGQLKGL) are enriched in low complexity.

Belongs to the involucrin family. As to quaternary structure, directly or indirectly cross-linked to cornifelin (CNFN). Substrate of transglutaminase. Specific glutamines or lysines are cross-linked to keratins, desmoplakin and to inter involucrin molecules. In terms of tissue distribution, keratinocytes of epidermis and other stratified squamous epithelia.

The protein localises to the cytoplasm. Functionally, part of the insoluble cornified cell envelope (CE) of stratified squamous epithelia. The protein is Involucrin (IVL) of Aotus trivirgatus (Three-striped night monkey).